The sequence spans 291 residues: Polyamine aminopropyltransferase (291 aa).

Positions 5–245 (PGPISLIEPL…YAVNYILGSL (241 aa)) constitute a PABS domain. Residue Gln36 participates in S-methyl-5'-thioadenosine binding. Spermidine-binding residues include His67 and Glu91. S-methyl-5'-thioadenosine is bound by residues Asp111 and 143–144 (DG). Catalysis depends on Asp164, which acts as the Proton acceptor.

Belongs to the spermidine/spermine synthase family. In terms of assembly, homodimer or homotetramer.

The protein resides in the cytoplasm. It catalyses the reaction S-adenosyl 3-(methylsulfanyl)propylamine + putrescine = S-methyl-5'-thioadenosine + spermidine + H(+). It participates in amine and polyamine biosynthesis; spermidine biosynthesis; spermidine from putrescine: step 1/1. Catalyzes the irreversible transfer of a propylamine group from the amino donor S-adenosylmethioninamine (decarboxy-AdoMet) to putrescine (1,4-diaminobutane) to yield spermidine. The sequence is that of Polyamine aminopropyltransferase from Pyrobaculum neutrophilum (strain DSM 2338 / JCM 9278 / NBRC 100436 / V24Sta) (Thermoproteus neutrophilus).